The primary structure comprises 59 residues: Potassium channel toxin alpha-KTx 1.12 (59 aa).

Residues 1–22 (MKILSVLLLALIICSIVGWSEA) form the signal peptide. Position 23 is a pyrrolidone carboxylic acid (Gln-23). 3 disulfide bridges follow: Cys-29–Cys-50, Cys-35–Cys-55, and Cys-39–Cys-57. The interaction with Ca(2+)-activated K(+) channels stretch occupies residues 48–55 (GKCMNKKC).

It belongs to the short scorpion toxin superfamily. Potassium channel inhibitor family. Alpha-KTx 01 subfamily. Expressed by the venom gland.

It is found in the secreted. Functionally, potent selective inhibitor of high conductance (maxi-K), different medium and small conductance calcium-activated potassium channels (KCa1.1/KCNMA1 and others), as well as a voltage-dependent potassium channel (Kv1.3/KCNA3&gt;Kv1.2/KCNA2&gt;Kv1.6/KCNA3&gt;&gt;Shaker/Sh). It blocks channel activity by a simple bimolecular inhibition process. Its function is as follows. Has a pH-specific antimicrobial activity against bacteria (B.subtilis, E.coli and S.aureus) and the fungus C.albicans. This is Potassium channel toxin alpha-KTx 1.12 from Leiurus hebraeus (Hebrew deathstalker scorpion).